The primary structure comprises 879 residues: Valine--tRNA ligase (879 aa).

Residues 45–55 carry the 'HIGH' region motif; sequence PNVTGKLHLGH. The short motif at 521–525 is the 'KMSKS' region element; that stretch reads KMSKS. Position 524 (lysine 524) interacts with ATP. The stretch at 806-879 forms a coiled coil; it reads LTELVNVDEE…ERMKELKESK (74 aa).

It belongs to the class-I aminoacyl-tRNA synthetase family. ValS type 1 subfamily. In terms of assembly, monomer.

The protein resides in the cytoplasm. It carries out the reaction tRNA(Val) + L-valine + ATP = L-valyl-tRNA(Val) + AMP + diphosphate. Its function is as follows. Catalyzes the attachment of valine to tRNA(Val). As ValRS can inadvertently accommodate and process structurally similar amino acids such as threonine, to avoid such errors, it has a 'posttransfer' editing activity that hydrolyzes mischarged Thr-tRNA(Val) in a tRNA-dependent manner. The polypeptide is Valine--tRNA ligase (Lactobacillus johnsonii (strain CNCM I-12250 / La1 / NCC 533)).